The chain runs to 66 residues: Large ribosomal subunit protein bL35 (66 aa).

The protein belongs to the bacterial ribosomal protein bL35 family.

The polypeptide is Large ribosomal subunit protein bL35 (Borreliella burgdorferi (strain ATCC 35210 / DSM 4680 / CIP 102532 / B31) (Borrelia burgdorferi)).